A 621-amino-acid chain; its full sequence is Very-long-chain aldehyde decarbonylase GL1-5 (621 aa).

The next 5 membrane-spanning stretches (helical) occupy residues 99-119, 126-146, 186-206, 224-244, and 332-352; these read IILSGILLYLGALYVPGGQHL, GAGLIALLHAGPVEFLYYWFH, LLFSIPLIACALTGTASIIAF, FELVPSWLFTWFPPLKYLMYT, and MWPLSWLSMVLTWTYGSSFTV. One can recognise a Fatty acid hydroxylase domain in the interval 138–272; it reads VEFLYYWFHR…MPFYDYIYNT (135 aa).

Belongs to the sterol desaturase family. As to quaternary structure, homodimer.

Its subcellular location is the endoplasmic reticulum membrane. It carries out the reaction a long-chain fatty aldehyde + 2 NADPH + O2 + H(+) = a long-chain alkane + formate + 2 NADP(+) + H2O. In terms of biological role, aldehyde decarbonylase involved in the conversion of aldehydes to alkanes. Core component of a very-long-chain alkane synthesis complex. In Oryza sativa subsp. indica (Rice), this protein is Very-long-chain aldehyde decarbonylase GL1-5.